We begin with the raw amino-acid sequence, 91 residues long: Non-specific lipid-transfer protein 1 (91 aa).

4 cysteine pairs are disulfide-bonded: Cys-4-Cys-51, Cys-14-Cys-28, Cys-29-Cys-74, and Cys-49-Cys-88.

As to expression, detected in seeds (at protein level).

Its function is as follows. Plant non-specific lipid-transfer proteins transfer phospholipids as well as galactolipids across membranes. May play a role in wax or cutin deposition in the cell walls of expanding epidermal cells and certain secretory tissues. The polypeptide is Non-specific lipid-transfer protein 1 (Trachyspermum ammi (Ajowan caraway)).